Reading from the N-terminus, the 269-residue chain is Putative pyridoxine kinase (269 aa).

N139 is an ATP binding site. E142 is a binding site for Mg(2+). ATP-binding positions include 176 to 180 (KGGGR), D189, V205, G214, and K239.

The protein belongs to the ThiD family.

The catalysed reaction is pyridoxal + ATP = pyridoxal 5'-phosphate + ADP + H(+). In terms of biological role, phosphorylates B6 vitamers; functions in a salvage pathway. Uses pyridoxal, pyridoxine, and pyridoxamine as substrates. The chain is Putative pyridoxine kinase (pdxK) from Treponema pallidum (strain Nichols).